A 213-amino-acid polypeptide reads, in one-letter code: E3 ubiquitin-protein ligase NleG8 (213 aa).

The RING/U-box domain stretch occupies residues 136-189 (CPITLCVPETGVFVKNARCSKVCSLYDISALTEMLRRNASHPLSREAFTPGMIV). A PDZ-binding motif motif is present at residues 211 to 213 (TRL).

The protein belongs to the NleG E3 ligase family. In terms of assembly, interacts with host GOPC (human protein).

It localises to the secreted. The protein resides in the host cytoplasm. The enzyme catalyses S-ubiquitinyl-[E2 ubiquitin-conjugating enzyme]-L-cysteine + [acceptor protein]-L-lysine = [E2 ubiquitin-conjugating enzyme]-L-cysteine + N(6)-ubiquitinyl-[acceptor protein]-L-lysine.. Functionally, effector proteins function to alter host cell physiology and promote bacterial survival in host tissues. This protein is an E3 ubiquitin-protein ligase that probably interferes with the host's ubiquitination pathway and targets host proteins for proteasomal degradation. Mice infected with a strain of bacteria deleted for this gene had an increased survival rate. Can be ubiquitinylated, and ubiquitinate ubiquitin, giving rise to polyubiquitin chains (in vitro). In Citrobacter rodentium, this protein is E3 ubiquitin-protein ligase NleG8.